The chain runs to 89 residues: Small ribosomal subunit protein uS15 (89 aa).

Residues 1-10 show a composition bias toward polar residues; the sequence is MAVTTDQKSQ. Residues 1–22 form a disordered region; sequence MAVTTDQKSQVMRDYQRAAGDT.

Belongs to the universal ribosomal protein uS15 family. As to quaternary structure, part of the 30S ribosomal subunit. Forms a bridge to the 50S subunit in the 70S ribosome, contacting the 23S rRNA.

Its function is as follows. One of the primary rRNA binding proteins, it binds directly to 16S rRNA where it helps nucleate assembly of the platform of the 30S subunit by binding and bridging several RNA helices of the 16S rRNA. In terms of biological role, forms an intersubunit bridge (bridge B4) with the 23S rRNA of the 50S subunit in the ribosome. The sequence is that of Small ribosomal subunit protein uS15 from Nitrosomonas europaea (strain ATCC 19718 / CIP 103999 / KCTC 2705 / NBRC 14298).